Reading from the N-terminus, the 1235-residue chain is Phosphorylase b kinase regulatory subunit alpha, liver isoform (1235 aa).

A phosphoserine mark is found at Ser697, Ser731, and Ser737. The tract at residues 808 to 838 (LSELYGKAGLNQEWGLIRYISGLLRKKVEVL) is calmodulin-binding. The segment covering 976 to 986 (SSASSPAISIH) has biased composition (low complexity). Positions 976 to 1002 (SSASSPAISIHEVGHTGVTKTERSGIN) are disordered. A phosphoserine mark is found at Ser984, Ser1016, and Ser1044. Residues 1032 to 1053 (AYSKSVRSSTPSSPTGTSSSDS) are compositionally biased toward low complexity. A disordered region spans residues 1032-1060 (AYSKSVRSSTPSSPTGTSSSDSGGHHISW). Residues 1059 to 1099 (SWGERQGQWLRRRRLDGAINRVPVGFYQRVWKILQKCHGLS) are calmodulin-binding. The S-farnesyl cysteine moiety is linked to residue Cys1232.

This sequence belongs to the phosphorylase b kinase regulatory chain family. As to quaternary structure, hexadecamer of 4 heterotetramers, each composed of alpha, beta, gamma, and delta subunits. Alpha (PHKA1 or PHKA2) and beta (PHKB) are regulatory subunits, gamma (PHKG1 or PHKG2) is the catalytic subunit, and delta is calmodulin. Post-translationally, although the final Cys may be farnesylated, the terminal tripeptide is probably not removed, and the C-terminus is not methylated. As to expression, predominantly expressed in liver and other non-muscle tissues.

The protein localises to the cell membrane. The protein operates within glycan biosynthesis; glycogen metabolism. By phosphorylation of various serine residues and by calcium. Functionally, phosphorylase b kinase catalyzes the phosphorylation of serine in certain substrates, including troponin I. The alpha chain may bind calmodulin. The chain is Phosphorylase b kinase regulatory subunit alpha, liver isoform (PHKA2) from Oryctolagus cuniculus (Rabbit).